Reading from the N-terminus, the 483-residue chain is Adenylyltransferase and sulfurtransferase uba4 (483 aa).

Residues glycine 100, aspartate 121, 128–132 (SNLHR), lysine 145, and 178–179 (DN) each bind ATP. 2 residues coordinate Zn(2+): cysteine 227 and cysteine 230. Residue cysteine 244 is the Glycyl thioester intermediate; for adenylyltransferase activity of the active site. Cysteine 306 and cysteine 309 together coordinate Zn(2+). A Rhodanese domain is found at 366–481 (ISKEPTIIDV…WREQIDPDWP (116 aa)). Cysteine 436 functions as the Cysteine persulfide intermediate; for sulfurtransferase activity in the catalytic mechanism.

The protein in the N-terminal section; belongs to the HesA/MoeB/ThiF family. UBA4 subfamily. It depends on Zn(2+) as a cofactor.

Its subcellular location is the cytoplasm. The protein resides in the cytosol. The catalysed reaction is [molybdopterin-synthase sulfur-carrier protein]-C-terminal Gly-Gly + ATP + H(+) = [molybdopterin-synthase sulfur-carrier protein]-C-terminal Gly-Gly-AMP + diphosphate. The enzyme catalyses [molybdopterin-synthase sulfur-carrier protein]-C-terminal Gly-Gly-AMP + S-sulfanyl-L-cysteinyl-[cysteine desulfurase] + AH2 = [molybdopterin-synthase sulfur-carrier protein]-C-terminal-Gly-aminoethanethioate + L-cysteinyl-[cysteine desulfurase] + A + AMP + 2 H(+). Its pathway is tRNA modification; 5-methoxycarbonylmethyl-2-thiouridine-tRNA biosynthesis. Functionally, plays a central role in 2-thiolation of mcm(5)S(2)U at tRNA wobble positions of cytosolic tRNA(Lys), tRNA(Glu) and tRNA(Gln). Also essential during biosynthesis of the molybdenum cofactor. Acts by mediating the C-terminal thiocarboxylation of sulfur carriers urm1 and mocs2a. Its N-terminus first activates urm1 and mocs2a as acyl-adenylates (-COAMP), then the persulfide sulfur on the catalytic cysteine is transferred to urm1 and mocs2a to form thiocarboxylation (-COSH) of their C-terminus. The reaction probably involves hydrogen sulfide that is generated from the persulfide intermediate and that acts as a nucleophile towards urm1 and mocs2a. Subsequently, a transient disulfide bond is formed. Does not use thiosulfate as sulfur donor; nfs1 probably acting as a sulfur donor for thiocarboxylation reactions. The polypeptide is Adenylyltransferase and sulfurtransferase uba4 (Neosartorya fischeri (strain ATCC 1020 / DSM 3700 / CBS 544.65 / FGSC A1164 / JCM 1740 / NRRL 181 / WB 181) (Aspergillus fischerianus)).